The chain runs to 72 residues: Large ribosomal subunit protein uL29 (72 aa).

This sequence belongs to the universal ribosomal protein uL29 family.

In Prochlorococcus marinus (strain AS9601), this protein is Large ribosomal subunit protein uL29.